Here is a 223-residue protein sequence, read N- to C-terminus: Endonuclease NucS (223 aa).

Belongs to the NucS endonuclease family.

The protein localises to the cytoplasm. In terms of biological role, cleaves both 3' and 5' ssDNA extremities of branched DNA structures. The protein is Endonuclease NucS of Mycobacterium marinum (strain ATCC BAA-535 / M).